Consider the following 317-residue polypeptide: Orange carotenoid-binding protein (317 aa).

The region spanning 18 to 169 (ADVVPATIAR…DMGFTAGKDG (152 aa)) is the OCP N-terminal domain. Echinenone-binding positions include 34–38 (EDQLA), 37–44 (LALIWFAY), 80–83 (TQAM), 107–117 (LGFWYRLGELM), 125–129 (IPAGY), 151–161 (ITVLRNAVVDM), Y201, 245–250 (CQNLKL), 273–284 (VQTPWFGGNVGM), and W288.

Belongs to the orange carotenoid-binding protein family. Monomer. Interacts with the APC core of the phycobilisome (PB), probably at a ratio of 1:1 in a light-independent manner; possibly only OCP-R binds to PBs. Interacts with FRP. Detachment from PBs is accelerated by FPR. The cofactor is 3'-hydroxyechinenone. In terms of processing, proteolytically cleaved into a red 16.7 kDa form named red carotenoid-binding protein (RCP) which lacks 15 residues from the N-terminus and approximately 150 residues from the C-terminus.

It is found in the cellular thylakoid membrane. Its function is as follows. Acts as a blue-light photoreceptor and photo-protectant. Essential for inhibiting damaged induced by excess blue-green light via a process known as non-photochemical quenching (NPQ). In the dark or dim light the stable inactive form (OCP-O) is orange, upon illumination with blue-green light it converts to a metastable active red form (OCP-R), inducing energy dissipation, quenching cellular fluorescence via NPQ. One OCP-R molecule is sufficient to quench 1 phycobilisome. More OCP-R accumulates under high-light and low temperature; in the dark OCP-R spontaneously reverts to OCP-O. Reversion of OCP-O is accelerated by FRP. A kinetic study suggests conversion of OCP-O to OCP-R is limited by cis-trans proline isomerization of either Gln224-Pro225 or Pro225-Pro226. This Synechocystis sp. (strain ATCC 27184 / PCC 6803 / Kazusa) protein is Orange carotenoid-binding protein.